A 554-amino-acid chain; its full sequence is Intraflagellar transport protein 56 (554 aa).

The disordered stretch occupies residues 1–27; that stretch reads MMLSRAKPAVGGESPHTDKRKKKGRKI. A compositionally biased stretch (basic residues) spans 18-27; the sequence is DKRKKKGRKI. TPR repeat units lie at residues 57–90, 92–125, 151–184, and 468–501; these read EDTN…ENCN, EVWV…LQNR, KEDQ…NREY, and ANDC…EGKR.

The protein belongs to the IFT56 family. In terms of assembly, component of the IFT complex B. Interacts with IFT46; the interaction is direct.

It localises to the cell projection. The protein localises to the cilium. Component of the intraflagellar transport (IFT) complex B required for transport of proteins in the motile cilium. Required for transport of specific ciliary cargo proteins related to motility, while it is neither required for IFT complex B assembly or motion nor for cilium assembly. Required for efficient coupling between the accumulation of GLI2 and GLI3 at the ciliary tips and their dissociation from the negative regulator SUFU. Plays a key role in maintaining the integrity of the IFT complex B and the proper ciliary localization of the IFT complex B components. Not required for IFT complex A ciliary localization or function. Essential for maintaining proper microtubule organization within the ciliary axoneme. The chain is Intraflagellar transport protein 56 from Rattus norvegicus (Rat).